Here is a 267-residue protein sequence, read N- to C-terminus: Ribosomal RNA small subunit methyltransferase A (267 aa).

6 residues coordinate S-adenosyl-L-methionine: Asn18, Leu20, Gly45, Glu66, Asp91, and Asn112.

This sequence belongs to the class I-like SAM-binding methyltransferase superfamily. rRNA adenine N(6)-methyltransferase family. RsmA subfamily.

The protein localises to the cytoplasm. The enzyme catalyses adenosine(1518)/adenosine(1519) in 16S rRNA + 4 S-adenosyl-L-methionine = N(6)-dimethyladenosine(1518)/N(6)-dimethyladenosine(1519) in 16S rRNA + 4 S-adenosyl-L-homocysteine + 4 H(+). In terms of biological role, specifically dimethylates two adjacent adenosines (A1518 and A1519) in the loop of a conserved hairpin near the 3'-end of 16S rRNA in the 30S particle. May play a critical role in biogenesis of 30S subunits. The protein is Ribosomal RNA small subunit methyltransferase A of Shewanella denitrificans (strain OS217 / ATCC BAA-1090 / DSM 15013).